The chain runs to 166 residues: MKKKQTTKALLVTCITDHKQDFYRLAFSYVKNQDDALDIVQESIKKALSSVETVRNPETIKSWFYKILVRTAIDFLRKQKKIRVMDDETIEFLSKGKEDHYKDTDLHEALDELPYRYKTIIILRFFEDLKLEEIAEITGENTNTVKTRLYRALKLMRIQLTKEDLS.

A Polymerase core binding motif is present at residues 38–51 (DIVQESIKKALSSV). The segment at residues 131–150 (LEEIAEITGENTNTVKTRLY) is a DNA-binding region (H-T-H motif).

The protein belongs to the sigma-70 factor family. ECF subfamily. Interacts with RsiV.

Sigma factors are initiation factors that promote the attachment of RNA polymerase to specific initiation sites and are then released. Positively regulates the expression of proteins involved in stress responses against bacitracin, paraquat and tellurite. This Bacillus subtilis (strain 168) protein is RNA polymerase sigma factor SigV (sigV).